Reading from the N-terminus, the 617-residue chain is Arrestin domain-containing protein B (617 aa).

Residues 1 to 109 form the C2 domain; the sequence is MDNRGLRLFI…ATFGQTDKWL (109 aa). Residues Asp20, Asp27, Asp76, Asp78, and Asp84 each coordinate Ca(2+).

The protein belongs to the arrestin family. Ca(2+) serves as cofactor.

The chain is Arrestin domain-containing protein B (adcB) from Dictyostelium discoideum (Social amoeba).